The following is a 204-amino-acid chain: Ribosomal RNA small subunit methyltransferase G (204 aa).

Gly73, Phe78, and Arg139 together coordinate S-adenosyl-L-methionine.

This sequence belongs to the methyltransferase superfamily. RNA methyltransferase RsmG family.

Its subcellular location is the cytoplasm. It catalyses the reaction guanosine(527) in 16S rRNA + S-adenosyl-L-methionine = N(7)-methylguanosine(527) in 16S rRNA + S-adenosyl-L-homocysteine. Functionally, specifically methylates the N7 position of guanine in position 527 of 16S rRNA. The chain is Ribosomal RNA small subunit methyltransferase G from Coxiella burnetii (strain Dugway 5J108-111).